Reading from the N-terminus, the 160-residue chain is SsrA-binding protein (160 aa).

The interval 134–160 (YDKRDTERERDSNRELHRAVRNKGKED) is disordered.

The protein belongs to the SmpB family.

Its subcellular location is the cytoplasm. Functionally, required for rescue of stalled ribosomes mediated by trans-translation. Binds to transfer-messenger RNA (tmRNA), required for stable association of tmRNA with ribosomes. tmRNA and SmpB together mimic tRNA shape, replacing the anticodon stem-loop with SmpB. tmRNA is encoded by the ssrA gene; the 2 termini fold to resemble tRNA(Ala) and it encodes a 'tag peptide', a short internal open reading frame. During trans-translation Ala-aminoacylated tmRNA acts like a tRNA, entering the A-site of stalled ribosomes, displacing the stalled mRNA. The ribosome then switches to translate the ORF on the tmRNA; the nascent peptide is terminated with the 'tag peptide' encoded by the tmRNA and targeted for degradation. The ribosome is freed to recommence translation, which seems to be the essential function of trans-translation. This is SsrA-binding protein from Pseudomonas fluorescens (strain SBW25).